Consider the following 34-residue polypeptide: Photosystem I reaction center subunit XII (34 aa).

A helical membrane pass occupies residues 10-32; it reads IFIALVVAAHAGVLAVRLCVSLY.

This sequence belongs to the PsaM family.

Its subcellular location is the cellular thylakoid membrane. The chain is Photosystem I reaction center subunit XII from Synechococcus sp. (strain WH7803).